The following is a 209-amino-acid chain: Mitochondrial import inner membrane translocase subunit Tim23 (209 aa).

The next 3 membrane-spanning stretches (helical) occupy residues 73–93, 125–145, and 172–194; these read FELA…FGAM, ALWA…GVII, and GGLR…YALY.

This sequence belongs to the Tim17/Tim22/Tim23 family. Component of the TIM23 complex at least composed of TIMM23, TIMM17 (TIMM17A or TIMM17B) and TIMM50; within this complex, directly interacts with TIMM50. The complex interacts with the TIMM44 component of the PAM complex and with DNAJC15. Upon mitochondrial depolarization, interacts with PINK1; the interaction is required for PINK1 accumulation at the outer mitochondrial membrane, kinase activation by autophosphorylation and PRKN recruitement to mitochondria.

The protein localises to the mitochondrion inner membrane. Functionally, essential component of the TIM23 complex, a complex that mediates the translocation of transit peptide-containing proteins across the mitochondrial inner membrane. Has a role in the activation of stress-induced mitophagy by protecting PINK1 from OMA1-mediated degradation and facilitating its accumulation at the outer mitochondrial membrane in response to depolarization. This is Mitochondrial import inner membrane translocase subunit Tim23 (TIMM23) from Bos taurus (Bovine).